Reading from the N-terminus, the 293-residue chain is Cell adhesion molecule CEACAM21 (293 aa).

An N-terminal signal peptide occupies residues 1–34; sequence MGPPSACPHRECIPWQGLLLTASLLTFWNAPTTA. Residues 35–240 lie on the Extracellular side of the membrane; sequence WLFIASAPFE…TVKSDDNTLG (206 aa). An N-linked (GlcNAc...) asparagine glycan is attached at Asn111. Positions 147–231 constitute an Ig-like C2-type domain; it reads PSIQASSTTV…SNRSDPLKLT (85 aa). Cys166 and Cys214 are joined by a disulfide. The helical transmembrane segment at 241–261 threads the bilayer; the sequence is ILIGVLVGSLLVAALVCFLLL. At 262–293 the chain is on the cytoplasmic side; sequence RKTGRASDQSDFREQQPPASTPGHGPSDSSIS. Residues 267-293 are disordered; sequence ASDQSDFREQQPPASTPGHGPSDSSIS.

It belongs to the immunoglobulin superfamily. CEA family.

It localises to the membrane. The protein is Cell adhesion molecule CEACAM21 of Homo sapiens (Human).